Reading from the N-terminus, the 603-residue chain is NAD 5'-nucleotidase (603 aa).

Residues 1–25 (MLLSKKSASFALSAFAMLFTSVALA) form the signal peptide. Zn(2+)-binding residues include aspartate 44, histidine 46, aspartate 94, asparagine 126, and histidine 227. Substrate-binding positions include arginine 397, arginine 437, phenylalanine 456, and 540-546 (YVAGGKD).

The protein belongs to the 5'-nucleotidase family. Zn(2+) is required as a cofactor.

The protein resides in the periplasm. It carries out the reaction a ribonucleoside 5'-phosphate + H2O = a ribonucleoside + phosphate. In terms of biological role, degrades NAD into adenosine and nicotinamide riboside, the latter being subsequently internalized by a specific permease. Also endowed with NAD(P) pyrophosphatase activity. Exhibits a broad substrate specificity, recognizing either mono- or dinucleotide nicotinamides and different adenosine phosphates with a maximal activity on 5'-adenosine monophosphate. This is NAD 5'-nucleotidase from Haemophilus influenzae (strain ATCC 51907 / DSM 11121 / KW20 / Rd).